We begin with the raw amino-acid sequence, 195 residues long: Putative manganese efflux pump MntP (195 aa).

6 helical membrane-spanning segments follow: residues 4–24 (ILIT…SLAM), 39–59 (FVLT…NLGL), 64–84 (FLGV…GWQM), 120–140 (ILLL…TLGT), 145–165 (ILIT…VGFA), and 175–195 (GSYA…KFVV).

Belongs to the MntP (TC 9.B.29) family.

It is found in the cell membrane. Functionally, probably functions as a manganese efflux pump. In Syntrophomonas wolfei subsp. wolfei (strain DSM 2245B / Goettingen), this protein is Putative manganese efflux pump MntP.